Here is a 109-residue protein sequence, read N- to C-terminus: Large ribosomal subunit protein uL24 (109 aa).

Belongs to the universal ribosomal protein uL24 family. Part of the 50S ribosomal subunit.

Its function is as follows. One of two assembly initiator proteins, it binds directly to the 5'-end of the 23S rRNA, where it nucleates assembly of the 50S subunit. One of the proteins that surrounds the polypeptide exit tunnel on the outside of the subunit. The chain is Large ribosomal subunit protein uL24 from Mesoplasma florum (strain ATCC 33453 / NBRC 100688 / NCTC 11704 / L1) (Acholeplasma florum).